A 301-amino-acid polypeptide reads, in one-letter code: D-alanine--D-alanine ligase (301 aa).

Positions 102 to 295 constitute an ATP-grasp domain; that stretch reads KAVFAAAGLP…FPALCAWMVE (194 aa). 128–181 is a binding site for ATP; sequence PLPRPYVIKPVNEGSSVGVFILREGDNRRADIARAWRHGSVAMTEEYVPGRELT. 3 residues coordinate Mg(2+): Asp-248, Glu-262, and Asn-264.

Belongs to the D-alanine--D-alanine ligase family. The cofactor is Mg(2+). It depends on Mn(2+) as a cofactor.

The protein localises to the cytoplasm. The enzyme catalyses 2 D-alanine + ATP = D-alanyl-D-alanine + ADP + phosphate + H(+). It functions in the pathway cell wall biogenesis; peptidoglycan biosynthesis. Its function is as follows. Cell wall formation. This chain is D-alanine--D-alanine ligase, found in Acidiphilium cryptum (strain JF-5).